We begin with the raw amino-acid sequence, 609 residues long: Dihydroxyacetone kinase (609 aa).

The 348-residue stretch at 8 to 355 folds into the DhaK domain; sequence YKQDLVHAHL…LDYPTKVPGW (348 aa). Substrate contacts are provided by residues 53-56, lysine 104, and aspartate 109; that span reads GSGH. Histidine 232 serves as the catalytic Tele-hemiaminal-histidine intermediate. The region spanning 392 to 600 is the DhaL domain; sequence STVKAVLESG…LAALVDGFAE (209 aa). ATP contacts are provided by residues 421–424, 467–468, 523–524, and 585–587; these read DGDC, TS, TL, and DPG.

The protein belongs to the dihydroxyacetone kinase (DAK) family.

The enzyme catalyses dihydroxyacetone + ATP = dihydroxyacetone phosphate + ADP + H(+). The catalysed reaction is D-glyceraldehyde + ATP = D-glyceraldehyde 3-phosphate + ADP + H(+). The protein operates within polyol metabolism; glycerol fermentation; glycerone phosphate from glycerol (oxidative route): step 2/2. In terms of biological role, catalyzes both the phosphorylation of dihydroxyacetone and of glyceraldehyde. The protein is Dihydroxyacetone kinase (DAK) of Pichia angusta (Yeast).